The sequence spans 589 residues: Probable translation initiation factor IF-2 (589 aa).

The tr-type G domain maps to 4–225 (VRSPFVVVMG…AGVSQRFIPR (222 aa)). The tract at residues 13–20 (GHVDVGKT) is G1. 13 to 20 (GHVDVGKT) serves as a coordination point for GTP. The interval 38-42 (MITQH) is G2. The interval 79-82 (DTPG) is G3. GTP-binding positions include 79–83 (DTPGH) and 133–136 (NKLD). The segment at 133-136 (NKLD) is G4. A G5 region spans residues 201–203 (SAV).

It belongs to the TRAFAC class translation factor GTPase superfamily. Classic translation factor GTPase family. IF-2 subfamily.

Its function is as follows. Function in general translation initiation by promoting the binding of the formylmethionine-tRNA to ribosomes. Seems to function along with eIF-2. The polypeptide is Probable translation initiation factor IF-2 (Pyrobaculum aerophilum (strain ATCC 51768 / DSM 7523 / JCM 9630 / CIP 104966 / NBRC 100827 / IM2)).